Reading from the N-terminus, the 175-residue chain is ATP synthase subunit b (175 aa).

The helical transmembrane segment at 14–34 threads the bilayer; sequence LSPNPGLIFWTTVSFVIVLLI.

It belongs to the ATPase B chain family. As to quaternary structure, F-type ATPases have 2 components, F(1) - the catalytic core - and F(0) - the membrane proton channel. F(1) has five subunits: alpha(3), beta(3), gamma(1), delta(1), epsilon(1). F(0) has four main subunits: a(1), b(2) and c(10-14). The alpha and beta chains form an alternating ring which encloses part of the gamma chain. F(1) is attached to F(0) by a central stalk formed by the gamma and epsilon chains, while a peripheral stalk is formed by the delta and b chains.

It localises to the cell inner membrane. In terms of biological role, f(1)F(0) ATP synthase produces ATP from ADP in the presence of a proton or sodium gradient. F-type ATPases consist of two structural domains, F(1) containing the extramembraneous catalytic core and F(0) containing the membrane proton channel, linked together by a central stalk and a peripheral stalk. During catalysis, ATP synthesis in the catalytic domain of F(1) is coupled via a rotary mechanism of the central stalk subunits to proton translocation. Component of the F(0) channel, it forms part of the peripheral stalk, linking F(1) to F(0). This Chlorobium phaeobacteroides (strain DSM 266 / SMG 266 / 2430) protein is ATP synthase subunit b.